Consider the following 253-residue polypeptide: Short chain dehydrogenase ple7 (253 aa).

Residues 5–25 (IVIVTGASHGIGLATVNLLLA) traverse the membrane as a helical segment. NADP(+) contacts are provided by Val8, Arg116, Tyr148, Lys152, and Asn184. Tyr148 acts as the Proton acceptor in catalysis. The active-site Lowers pKa of active site Tyr is Lys152. Asn187 carries an N-linked (GlcNAc...) asparagine glycan.

The protein belongs to the short-chain dehydrogenases/reductases (SDR) family.

The protein localises to the membrane. The protein operates within secondary metabolite biosynthesis; terpenoid biosynthesis. In terms of biological role, short chain dehydrogenase; part of the gene cluster that mediates the biosynthesis of pleuromutilin, a tricyclic diterpene showing antibacterial properties. The geranylgeranyl diphosphate (GGPP) synthase ple4 catalyzes the first step in pleuromutilin biosynthesis. GGPP is then substrate of the premutilin synthase (PS) ple3 to yield premutilin. Premutilin synthase is a bifunctional enzyme composed of the fusion of a class II diterpene cyclase (DTC) and a class I diterpene synthase (DTS), with the corresponding domains and active sites containing characteristic aspartate-rich motifs. GGPP is first converted to mutildienyl-diphosphate (MPP) at the class II DTC site. MPP is subsequently further cyclized at the class I DTS site, followed by a 1,5-hydride shift and addition of water prior to terminating deprotonation, to yield premutilin. The cytochrome P450 monooxygenases ple5 and ple6 hydroxylate premutilin at C-11 and C-3, respectively, producing 11-hydroxypremutilin and 3-hydroxypremutilin. The combination of the actions of both ple5 and ple6 leads to the production of 3,11-dihydroxypremutilin. The short chain dehydrogenase ple7 further converts 3,11-dihydroxypremutilin into mutilin. The acetyltransferase ple2 then acetylates mutilin to produce 14-O-acetylmutilin. Finally, the cytochrome P450 monooxygenase ple1 catalyzes hydroxylation on the alpha position of the acetyl side chain of 14-O-acetylmutilin to yield pleuromutilin. This is Short chain dehydrogenase ple7 from Rhodocybe pseudopiperita (Clitopilus pseudopiperitus).